The sequence spans 147 residues: Secreted RxLR effector protein BLN04 (147 aa).

A signal peptide spans Met-1–Gly-23. The dEER signature appears at Ser-58–Arg-61. A helical membrane pass occupies residues Val-117–Ile-137.

It belongs to the RxLR effector family. In terms of assembly, interacts with host transcription factor NAC069.

The protein localises to the secreted. The protein resides in the host membrane. In terms of biological role, secreted effector that inhibits stress-induced relocalization of the transcription factor NAC069 to the nucleus, thus affecting its broad role in abiotic and biotic stress responses. The protein is Secreted RxLR effector protein BLN04 of Bremia lactucae (Lettuce downy mildew).